A 385-amino-acid polypeptide reads, in one-letter code: Mitogen-activated protein kinase HOG1 (385 aa).

Residues 23-305 (YTDLNPVGMG…AASALTHPYM (283 aa)) form the Protein kinase domain. ATP is bound by residues 29-37 (VGMGAFGLV) and Lys-52. The active-site Proton acceptor is Asp-144. Thr-174 bears the Phosphothreonine mark. The short motif at 174–176 (TGY) is the TXY element. Tyr-176 carries the post-translational modification Phosphotyrosine.

The protein belongs to the protein kinase superfamily. Ser/Thr protein kinase family. MAP kinase subfamily. HOG1 sub-subfamily. Mg(2+) is required as a cofactor. Post-translationally, dually phosphorylated on Thr-174 and Tyr-176, which activates the enzyme.

The protein resides in the cytoplasm. Its subcellular location is the nucleus. The catalysed reaction is L-seryl-[protein] + ATP = O-phospho-L-seryl-[protein] + ADP + H(+). It carries out the reaction L-threonyl-[protein] + ATP = O-phospho-L-threonyl-[protein] + ADP + H(+). Its activity is regulated as follows. Activated by tyrosine and threonine phosphorylation. Functionally, proline-directed serine/threonine-protein kinase involved in a signal transduction pathway that is activated by changes in the osmolarity of the extracellular environment. Controls osmotic regulation of transcription of target genes. This Scheffersomyces stipitis (strain ATCC 58785 / CBS 6054 / NBRC 10063 / NRRL Y-11545) (Yeast) protein is Mitogen-activated protein kinase HOG1 (HOG1).